The sequence spans 114 residues: Ribonuclease P protein component (114 aa).

Belongs to the RnpA family. Consists of a catalytic RNA component (M1 or rnpB) and a protein subunit.

It carries out the reaction Endonucleolytic cleavage of RNA, removing 5'-extranucleotides from tRNA precursor.. Its function is as follows. RNaseP catalyzes the removal of the 5'-leader sequence from pre-tRNA to produce the mature 5'-terminus. It can also cleave other RNA substrates such as 4.5S RNA. The protein component plays an auxiliary but essential role in vivo by binding to the 5'-leader sequence and broadening the substrate specificity of the ribozyme. The chain is Ribonuclease P protein component from Staphylococcus haemolyticus (strain JCSC1435).